The following is a 333-amino-acid chain: Phosphate acyltransferase (333 aa).

The protein belongs to the PlsX family. Homodimer. Probably interacts with PlsY.

It is found in the cytoplasm. The catalysed reaction is a fatty acyl-[ACP] + phosphate = an acyl phosphate + holo-[ACP]. It participates in lipid metabolism; phospholipid metabolism. In terms of biological role, catalyzes the reversible formation of acyl-phosphate (acyl-PO(4)) from acyl-[acyl-carrier-protein] (acyl-ACP). This enzyme utilizes acyl-ACP as fatty acyl donor, but not acyl-CoA. This Bacillus subtilis (strain 168) protein is Phosphate acyltransferase.